Reading from the N-terminus, the 396-residue chain is Tryptophan synthase beta chain (396 aa).

K86 is modified (N6-(pyridoxal phosphate)lysine).

This sequence belongs to the TrpB family. Tetramer of two alpha and two beta chains. Pyridoxal 5'-phosphate is required as a cofactor.

The enzyme catalyses (1S,2R)-1-C-(indol-3-yl)glycerol 3-phosphate + L-serine = D-glyceraldehyde 3-phosphate + L-tryptophan + H2O. It participates in amino-acid biosynthesis; L-tryptophan biosynthesis; L-tryptophan from chorismate: step 5/5. In terms of biological role, the beta subunit is responsible for the synthesis of L-tryptophan from indole and L-serine. The chain is Tryptophan synthase beta chain from Francisella philomiragia subsp. philomiragia (strain ATCC 25017 / CCUG 19701 / FSC 153 / O#319-036).